The chain runs to 200 residues: MAGLKQHSGLVVPLDAANVDTDAIIPKQFLQAITRVGFGKHLFHEWRYLDAEETRLNPDFVLNFPQYQGATILLARKNLGCGSSREHAPWALADYGFKVMIAPSFADIFYNNSLNNHMLPIRLSEEEVEEIFQWVWANEGKQIHIDLEAMTVTVGDKIYRFELDEFRRHCLLNGLDNIGLTLQHEDAIIAYESKIPAFLR.

The protein belongs to the LeuD family. LeuD type 1 subfamily. In terms of assembly, heterodimer of LeuC and LeuD.

The catalysed reaction is (2R,3S)-3-isopropylmalate = (2S)-2-isopropylmalate. It functions in the pathway amino-acid biosynthesis; L-leucine biosynthesis; L-leucine from 3-methyl-2-oxobutanoate: step 2/4. Functionally, catalyzes the isomerization between 2-isopropylmalate and 3-isopropylmalate, via the formation of 2-isopropylmaleate. The sequence is that of 3-isopropylmalate dehydratase small subunit from Actinobacillus pleuropneumoniae serotype 7 (strain AP76).